Reading from the N-terminus, the 560-residue chain is RNA polymerase-associated protein C651.09c (560 aa).

Disordered stretches follow at residues 15–74 (DDSD…KNPY) and 128–207 (YMAQ…KVEQ). Over residues 148–171 (GKRDKLTELKKRRQERSARSVSER) the composition is skewed to basic and acidic residues. The span at 180-195 (DYEEQNESEKSEEEEG) shows a compositional bias: acidic residues. The residue at position 197 (serine 197) is a Phosphoserine. The Plus3 domain maps to 214–345 (SANLYDLNAI…KLNDLRDMSK (132 aa)). Residues 387–456 (AGNAELVKEI…RRRLSAAATA (70 aa)) are a coiled coil. Residues 440–449 (EQRMNEERRR) show a composition bias toward basic and acidic residues. Residues 440-486 (EQRMNEERRRLSAAATATPMSAPTSVLTGTSPQPSPSLSTSIMSTPK) form a disordered region. A compositionally biased stretch (low complexity) spans 451-480 (SAAATATPMSAPTSVLTGTSPQPSPSLSTS). Phosphoserine occurs at positions 502 and 506.

As to quaternary structure, component of the PAF1 complex.

Its subcellular location is the nucleus. It is found in the nucleoplasm. In terms of biological role, the PAF1 complex is a multifunctional complex. Involved in transcription initiation via genetic interactions with TATA-binding proteins. Involved in elongation. Also has a role in transcription-coupled histone modification. Important for TATA site selection by TBP. Directly or indirectly regulates the DNA-binding properties of the TATA box-binding protein, and the relative activities of different TATA elements. This Schizosaccharomyces pombe (strain 972 / ATCC 24843) (Fission yeast) protein is RNA polymerase-associated protein C651.09c.